Here is a 403-residue protein sequence, read N- to C-terminus: MSKFNRIHLVVLDSVGIGAAPDANNFVNAGVPDGASDTLGHISKTVGLNVPNMAKIGLGNIPRETPLKTVAAESNPTGYATKLEEVSLGKDTMTGHWEIMGLNITEPFDTFWNGFPEEILTKIEEFSGRKVIRETNKPYSGTAVIYDFGPRQMETGELIIYTSADPVLQIAAHEDIIPLDELYRICEYARSITLERPALLGRIIARPYVGEPGNFTRTANRRDLAVSPFSPTVLDKLNEAGIDTYAVGKINDIFNGAGINHDMGHNKSNSHGIDTLLKTMGLAEFEKGFSFTNLVDFDALYGHRRNAHGYRDCLHEFDERLPEIIAAMRENDLLLITADHGNDPTYAGTDHTREYIPLLAYSPAFKGNGLIPVGHFADISATVADNFGVETAMIGESFLDKLV.

Mn(2+) contacts are provided by D13, D298, H303, D339, H340, and H351.

Belongs to the phosphopentomutase family. Mn(2+) serves as cofactor.

It is found in the cytoplasm. The enzyme catalyses 2-deoxy-alpha-D-ribose 1-phosphate = 2-deoxy-D-ribose 5-phosphate. The catalysed reaction is alpha-D-ribose 1-phosphate = D-ribose 5-phosphate. It functions in the pathway carbohydrate degradation; 2-deoxy-D-ribose 1-phosphate degradation; D-glyceraldehyde 3-phosphate and acetaldehyde from 2-deoxy-alpha-D-ribose 1-phosphate: step 1/2. In terms of biological role, isomerase that catalyzes the conversion of deoxy-ribose 1-phosphate (dRib-1-P) and ribose 1-phosphate (Rib-1-P) to deoxy-ribose 5-phosphate (dRib-5-P) and ribose 5-phosphate (Rib-5-P), respectively. This Streptococcus pneumoniae serotype 2 (strain D39 / NCTC 7466) protein is Phosphopentomutase.